A 396-amino-acid chain; its full sequence is Tryptophan synthase beta chain (396 aa).

An N6-(pyridoxal phosphate)lysine modification is found at lysine 86.

This sequence belongs to the TrpB family. In terms of assembly, tetramer of two alpha and two beta chains. Pyridoxal 5'-phosphate is required as a cofactor.

The catalysed reaction is (1S,2R)-1-C-(indol-3-yl)glycerol 3-phosphate + L-serine = D-glyceraldehyde 3-phosphate + L-tryptophan + H2O. Its pathway is amino-acid biosynthesis; L-tryptophan biosynthesis; L-tryptophan from chorismate: step 5/5. Functionally, the beta subunit is responsible for the synthesis of L-tryptophan from indole and L-serine. This is Tryptophan synthase beta chain from Francisella philomiragia subsp. philomiragia (strain ATCC 25017 / CCUG 19701 / FSC 153 / O#319-036).